A 378-amino-acid polypeptide reads, in one-letter code: Lipoyl synthase, mitochondrial (378 aa).

Positions 109, 114, 120, 140, 144, 147, and 356 each coordinate [4Fe-4S] cluster. The Radical SAM core domain maps to 125 to 345 (ETGTATATIM…QTLGMEMGFR (221 aa)).

The protein belongs to the radical SAM superfamily. Lipoyl synthase family. It depends on [4Fe-4S] cluster as a cofactor.

The protein resides in the mitochondrion. The catalysed reaction is [[Fe-S] cluster scaffold protein carrying a second [4Fe-4S](2+) cluster] + N(6)-octanoyl-L-lysyl-[protein] + 2 oxidized [2Fe-2S]-[ferredoxin] + 2 S-adenosyl-L-methionine + 4 H(+) = [[Fe-S] cluster scaffold protein] + N(6)-[(R)-dihydrolipoyl]-L-lysyl-[protein] + 4 Fe(3+) + 2 hydrogen sulfide + 2 5'-deoxyadenosine + 2 L-methionine + 2 reduced [2Fe-2S]-[ferredoxin]. It participates in protein modification; protein lipoylation via endogenous pathway; protein N(6)-(lipoyl)lysine from octanoyl-[acyl-carrier-protein]: step 2/2. Catalyzes the radical-mediated insertion of two sulfur atoms into the C-6 and C-8 positions of the octanoyl moiety bound to the lipoyl domains of lipoate-dependent enzymes, thereby converting the octanoylated domains into lipoylated derivatives. The protein is Lipoyl synthase, mitochondrial of Medicago truncatula (Barrel medic).